Consider the following 363-residue polypeptide: Protein TAX-1 (363 aa).

Residues 129-363 (RYGNAEEILS…IPFRGVAAEQ (235 aa)) form a required for localization to the flagellum and for flagellar motility region. TPR repeat units follow at residues 157-190 (AELH…LSVM) and 199-232 (TFAY…WLKH).

Interacts with TTC29.

The protein resides in the cytoplasm. It localises to the cytoskeleton. The protein localises to the flagellum axoneme. Its function is as follows. Required for flagellum motility. In Trypanosoma brucei brucei (strain 927/4 GUTat10.1), this protein is Protein TAX-1.